The primary structure comprises 723 residues: ATP-dependent zinc metalloprotease YME1 homolog (723 aa).

Residues 198-220 form a helical membrane-spanning segment; that stretch reads LTRFYIFLVFCIFFGYLTGRIRV. 288-295 contacts ATP; the sequence is GPPGTGKT. Residue histidine 509 participates in Zn(2+) binding. The active site involves glutamate 510. 2 residues coordinate Zn(2+): histidine 513 and aspartate 587.

In the N-terminal section; belongs to the AAA ATPase family. This sequence in the C-terminal section; belongs to the peptidase M41 family. Zn(2+) is required as a cofactor.

It localises to the mitochondrion inner membrane. Its subcellular location is the mitochondrion. Functionally, ATP-dependent metalloprotease that catalyzes the degradation of folded and unfolded proteins with a suitable degron sequence in the mitochondrial intermembrane region. Plays an important role in regulating mitochondrial morphology and function. The sequence is that of ATP-dependent zinc metalloprotease YME1 homolog (ymel-1) from Caenorhabditis elegans.